Consider the following 179-residue polypeptide: Large ribosomal subunit protein uL5 (179 aa).

The protein belongs to the universal ribosomal protein uL5 family. As to quaternary structure, part of the 50S ribosomal subunit; part of the 5S rRNA/L5/L18/L25 subcomplex. Contacts the 5S rRNA and the P site tRNA. Forms a bridge to the 30S subunit in the 70S ribosome.

Its function is as follows. This is one of the proteins that bind and probably mediate the attachment of the 5S RNA into the large ribosomal subunit, where it forms part of the central protuberance. In the 70S ribosome it contacts protein S13 of the 30S subunit (bridge B1b), connecting the 2 subunits; this bridge is implicated in subunit movement. Contacts the P site tRNA; the 5S rRNA and some of its associated proteins might help stabilize positioning of ribosome-bound tRNAs. The polypeptide is Large ribosomal subunit protein uL5 (Chromobacterium violaceum (strain ATCC 12472 / DSM 30191 / JCM 1249 / CCUG 213 / NBRC 12614 / NCIMB 9131 / NCTC 9757 / MK)).